A 455-amino-acid chain; its full sequence is Ribulose bisphosphate carboxylase large chain (455 aa).

At Lys-5 the chain carries N6,N6,N6-trimethyllysine. Residues Asn-114 and Thr-164 each coordinate substrate. The active-site Proton acceptor is the Lys-166. Lys-168 is a substrate binding site. 3 residues coordinate Mg(2+): Lys-192, Asp-194, and Glu-195. The residue at position 192 (Lys-192) is an N6-carboxylysine. The active-site Proton acceptor is the His-285. 3 residues coordinate substrate: Arg-286, His-318, and Ser-370.

This sequence belongs to the RuBisCO large chain family. Type I subfamily. As to quaternary structure, heterohexadecamer of 8 large chains and 8 small chains; disulfide-linked. The disulfide link is formed within the large subunit homodimers. Requires Mg(2+) as cofactor. In terms of processing, the disulfide bond which can form in the large chain dimeric partners within the hexadecamer appears to be associated with oxidative stress and protein turnover.

It localises to the plastid. The protein resides in the chloroplast. It carries out the reaction 2 (2R)-3-phosphoglycerate + 2 H(+) = D-ribulose 1,5-bisphosphate + CO2 + H2O. The enzyme catalyses D-ribulose 1,5-bisphosphate + O2 = 2-phosphoglycolate + (2R)-3-phosphoglycerate + 2 H(+). RuBisCO catalyzes two reactions: the carboxylation of D-ribulose 1,5-bisphosphate, the primary event in carbon dioxide fixation, as well as the oxidative fragmentation of the pentose substrate in the photorespiration process. Both reactions occur simultaneously and in competition at the same active site. This is Ribulose bisphosphate carboxylase large chain from Lupinus cosentinii (West Australian blue lupine).